The chain runs to 412 residues: Phosphoglycerate kinase (412 aa).

Substrate is bound by residues 22 to 24 (DFN), arginine 37, 60 to 63 (HLGK), arginine 120, and arginine 172. ATP contacts are provided by residues lysine 223, glycine 310, glutamate 341, and 368-371 (GGDS).

It belongs to the phosphoglycerate kinase family. As to quaternary structure, monomer.

The protein resides in the cytoplasm. It carries out the reaction (2R)-3-phosphoglycerate + ATP = (2R)-3-phospho-glyceroyl phosphate + ADP. Its pathway is carbohydrate degradation; glycolysis; pyruvate from D-glyceraldehyde 3-phosphate: step 2/5. This is Phosphoglycerate kinase from Spiroplasma citri.